A 524-amino-acid chain; its full sequence is Peptide chain release factor 3 (524 aa).

The 267-residue stretch at 9–275 folds into the tr-type G domain; that stretch reads QRRRTFAIIS…AVVELSPPPL (267 aa). GTP is bound by residues 18–25, 86–90, and 140–143; these read SHPDAGKT, DTPGH, and NKLD.

It belongs to the TRAFAC class translation factor GTPase superfamily. Classic translation factor GTPase family. PrfC subfamily.

Its subcellular location is the cytoplasm. In terms of biological role, increases the formation of ribosomal termination complexes and stimulates activities of RF-1 and RF-2. It binds guanine nucleotides and has strong preference for UGA stop codons. It may interact directly with the ribosome. The stimulation of RF-1 and RF-2 is significantly reduced by GTP and GDP, but not by GMP. The sequence is that of Peptide chain release factor 3 from Methylobacillus flagellatus (strain ATCC 51484 / DSM 6875 / VKM B-1610 / KT).